Consider the following 354-residue polypeptide: Phospho-N-acetylmuramoyl-pentapeptide-transferase (354 aa).

10 helical membrane passes run 23-43 (FSFF…IAWA), 66-86 (TPTM…LLCA), 88-108 (LDNV…ALGF), 130-150 (LAVQ…HGEL), 161-181 (FALL…IVAA), 193-213 (GLAS…AYIC), 230-250 (VGET…FLWF), 257-277 (VFMG…MGVM), 282-302 (ILLI…ILQV), and 331-351 (KIIV…LTAL).

Belongs to the glycosyltransferase 4 family. MraY subfamily. The cofactor is Mg(2+).

It is found in the cell inner membrane. The catalysed reaction is UDP-N-acetyl-alpha-D-muramoyl-L-alanyl-gamma-D-glutamyl-meso-2,6-diaminopimeloyl-D-alanyl-D-alanine + di-trans,octa-cis-undecaprenyl phosphate = di-trans,octa-cis-undecaprenyl diphospho-N-acetyl-alpha-D-muramoyl-L-alanyl-D-glutamyl-meso-2,6-diaminopimeloyl-D-alanyl-D-alanine + UMP. It participates in cell wall biogenesis; peptidoglycan biosynthesis. In terms of biological role, catalyzes the initial step of the lipid cycle reactions in the biosynthesis of the cell wall peptidoglycan: transfers peptidoglycan precursor phospho-MurNAc-pentapeptide from UDP-MurNAc-pentapeptide onto the lipid carrier undecaprenyl phosphate, yielding undecaprenyl-pyrophosphoryl-MurNAc-pentapeptide, known as lipid I. The chain is Phospho-N-acetylmuramoyl-pentapeptide-transferase from Campylobacter curvus (strain 525.92).